A 210-amino-acid polypeptide reads, in one-letter code: Protein SgcE (210 aa).

Position 6 (serine 6) interacts with substrate. Positions 31, 33, and 64 each coordinate a divalent metal cation. Catalysis depends on aspartate 33, which acts as the Proton acceptor. Residues histidine 64, 140 to 143 (DGQG), 169 to 171 (DGG), and 191 to 192 (GR) contribute to the substrate site. An a divalent metal cation-binding site is contributed by aspartate 169. Aspartate 169 (proton donor) is an active-site residue.

The protein belongs to the ribulose-phosphate 3-epimerase family. It depends on Co(2+) as a cofactor. Fe(2+) serves as cofactor. Mn(2+) is required as a cofactor. The cofactor is Zn(2+).

The protein operates within carbohydrate degradation. Its function is as follows. Probable pentose-5-phosphate 3-epimerase. The chain is Protein SgcE (sgcE) from Escherichia coli (strain K12).